The following is a 217-amino-acid chain: Ribosomal RNA small subunit methyltransferase G (217 aa).

S-adenosyl-L-methionine is bound by residues G76, F81, 128 to 129 (LE), and R142.

Belongs to the methyltransferase superfamily. RNA methyltransferase RsmG family.

The protein localises to the cytoplasm. It catalyses the reaction guanosine(527) in 16S rRNA + S-adenosyl-L-methionine = N(7)-methylguanosine(527) in 16S rRNA + S-adenosyl-L-homocysteine. In terms of biological role, specifically methylates the N7 position of guanine in position 527 of 16S rRNA. The sequence is that of Ribosomal RNA small subunit methyltransferase G from Rhizorhabdus wittichii (strain DSM 6014 / CCUG 31198 / JCM 15750 / NBRC 105917 / EY 4224 / RW1) (Sphingomonas wittichii).